The primary structure comprises 241 residues: MKLFVYHTPELTPTDDLPDCAVVIDVLRATTTIATALNAGAEAVQAFSSLEQLMEVSETWLPEKRLRAGERGGAKVKECDLGNSPLDCTPTVVEGKRLFISTTNGTRALQRVEHSQIVIAAALINRQTVVNYLLSEHPSTVWLLGSGWQGGYSLEDAVCAGAIADLLLQHLEGVEIGNDEVIAALALYRQWQTNLLDMFYKSSHGQRLLGLNCHEDLKYCSQTDVLEVLPIQKEPGVLIKY.

Belongs to the ComB family. It depends on Mg(2+) as a cofactor.

It carries out the reaction (2R)-O-phospho-3-sulfolactate + H2O = (2R)-3-sulfolactate + phosphate. In Gloeothece citriformis (strain PCC 7424) (Cyanothece sp. (strain PCC 7424)), this protein is Probable 2-phosphosulfolactate phosphatase.